We begin with the raw amino-acid sequence, 160 residues long: Coat protein TP3 (160 aa).

Its subcellular location is the virion. This chain is Coat protein TP3, found in Thermoproteus tenax (TTV1).